We begin with the raw amino-acid sequence, 127 residues long: uncharacterized protein (127 aa).

This is an uncharacterized protein from Human cytomegalovirus (strain Toledo) (HHV-5).